The following is a 118-amino-acid chain: Large ribosomal subunit protein bL20 (118 aa).

It belongs to the bacterial ribosomal protein bL20 family.

Functionally, binds directly to 23S ribosomal RNA and is necessary for the in vitro assembly process of the 50S ribosomal subunit. It is not involved in the protein synthesizing functions of that subunit. In Pelagibacter ubique (strain HTCC1062), this protein is Large ribosomal subunit protein bL20.